The following is a 67-amino-acid chain: ATP synthase protein 8 (67 aa).

Residues 8 to 24 (TWFTTVLSTTITLFILM) form a helical membrane-spanning segment. Lysine 54 carries the post-translational modification N6-acetyllysine; alternate. At lysine 54 the chain carries N6-succinyllysine; alternate. The residue at position 57 (lysine 57) is an N6-acetyllysine.

Belongs to the ATPase protein 8 family. F-type ATPases have 2 components, CF(1) - the catalytic core - and CF(0) - the membrane proton channel. Component of an ATP synthase complex composed of ATP5PB, ATP5MC1, ATP5F1E, ATP5PD, ATP5ME, ATP5PF, ATP5MF, MT-ATP6, MT-ATP8, ATP5F1A, ATP5F1B, ATP5F1D, ATP5F1C, ATP5PO, ATP5MG, ATP5MK and ATP5MJ. Interacts with PRICKLE3.

The protein resides in the mitochondrion membrane. Functionally, mitochondrial membrane ATP synthase (F(1)F(0) ATP synthase or Complex V) produces ATP from ADP in the presence of a proton gradient across the membrane which is generated by electron transport complexes of the respiratory chain. F-type ATPases consist of two structural domains, F(1) - containing the extramembraneous catalytic core and F(0) - containing the membrane proton channel, linked together by a central stalk and a peripheral stalk. During catalysis, ATP synthesis in the catalytic domain of F(1) is coupled via a rotary mechanism of the central stalk subunits to proton translocation. Part of the complex F(0) domain. Minor subunit located with subunit a in the membrane. In Microtus pennsylvanicus (Meadow vole), this protein is ATP synthase protein 8 (MT-ATP8).